Here is a 139-residue protein sequence, read N- to C-terminus: Large-conductance mechanosensitive channel (139 aa).

Transmembrane regions (helical) follow at residues 9–29 and 79–99; these read AFAV…GAAF and IQTV…VKAI.

The protein belongs to the MscL family. In terms of assembly, homopentamer.

The protein localises to the cell inner membrane. Channel that opens in response to stretch forces in the membrane lipid bilayer. May participate in the regulation of osmotic pressure changes within the cell. The sequence is that of Large-conductance mechanosensitive channel from Pseudomonas putida (strain ATCC 700007 / DSM 6899 / JCM 31910 / BCRC 17059 / LMG 24140 / F1).